A 220-amino-acid polypeptide reads, in one-letter code: 3-dehydroquinate dehydratase (220 aa).

3-dehydroquinate contacts are provided by residues 29-31 and Arg-56; that span reads EFR. The active-site Proton donor/acceptor is His-116. The Schiff-base intermediate with substrate role is filled by Lys-142. Positions 180, 200, and 204 each coordinate 3-dehydroquinate.

Belongs to the type-I 3-dehydroquinase family. As to quaternary structure, homodimer.

It carries out the reaction 3-dehydroquinate = 3-dehydroshikimate + H2O. It functions in the pathway metabolic intermediate biosynthesis; chorismate biosynthesis; chorismate from D-erythrose 4-phosphate and phosphoenolpyruvate: step 3/7. Functionally, involved in the third step of the chorismate pathway, which leads to the biosynthesis of aromatic amino acids. Catalyzes the cis-dehydration of 3-dehydroquinate (DHQ) and introduces the first double bond of the aromatic ring to yield 3-dehydroshikimate. This is 3-dehydroquinate dehydratase from Methanocaldococcus jannaschii (strain ATCC 43067 / DSM 2661 / JAL-1 / JCM 10045 / NBRC 100440) (Methanococcus jannaschii).